A 486-amino-acid chain; its full sequence is UDP-N-acetylmuramate--L-alanine ligase (486 aa).

ATP is bound at residue 126 to 132; that stretch reads GTHGKTS.

Belongs to the MurCDEF family.

The protein resides in the cytoplasm. The enzyme catalyses UDP-N-acetyl-alpha-D-muramate + L-alanine + ATP = UDP-N-acetyl-alpha-D-muramoyl-L-alanine + ADP + phosphate + H(+). It functions in the pathway cell wall biogenesis; peptidoglycan biosynthesis. Cell wall formation. The sequence is that of UDP-N-acetylmuramate--L-alanine ligase from Buchnera aphidicola subsp. Baizongia pistaciae (strain Bp).